We begin with the raw amino-acid sequence, 88 residues long: Small ribosomal subunit protein uS17 (88 aa).

It belongs to the universal ribosomal protein uS17 family. Part of the 30S ribosomal subunit.

Its function is as follows. One of the primary rRNA binding proteins, it binds specifically to the 5'-end of 16S ribosomal RNA. In Lactobacillus delbrueckii subsp. bulgaricus (strain ATCC 11842 / DSM 20081 / BCRC 10696 / JCM 1002 / NBRC 13953 / NCIMB 11778 / NCTC 12712 / WDCM 00102 / Lb 14), this protein is Small ribosomal subunit protein uS17.